Reading from the N-terminus, the 294-residue chain is Glycine--tRNA ligase alpha subunit (294 aa).

It belongs to the class-II aminoacyl-tRNA synthetase family. Tetramer of two alpha and two beta subunits.

It is found in the cytoplasm. The enzyme catalyses tRNA(Gly) + glycine + ATP = glycyl-tRNA(Gly) + AMP + diphosphate. The protein is Glycine--tRNA ligase alpha subunit of Nostoc sp. (strain PCC 7120 / SAG 25.82 / UTEX 2576).